A 224-amino-acid chain; its full sequence is Urease accessory protein UreF (224 aa).

Belongs to the UreF family. As to quaternary structure, ureD, UreF and UreG form a complex that acts as a GTP-hydrolysis-dependent molecular chaperone, activating the urease apoprotein by helping to assemble the nickel containing metallocenter of UreC. The UreE protein probably delivers the nickel.

It localises to the cytoplasm. Its function is as follows. Required for maturation of urease via the functional incorporation of the urease nickel metallocenter. In Citrobacter koseri (strain ATCC BAA-895 / CDC 4225-83 / SGSC4696), this protein is Urease accessory protein UreF.